Here is a 316-residue protein sequence, read N- to C-terminus: 4-diphosphocytidyl-2-C-methyl-D-erythritol kinase (316 aa).

Lys14 is an active-site residue. 96 to 106 (PMGAGLGGGSS) contacts ATP. Asp138 is a catalytic residue.

It belongs to the GHMP kinase family. IspE subfamily.

The enzyme catalyses 4-CDP-2-C-methyl-D-erythritol + ATP = 4-CDP-2-C-methyl-D-erythritol 2-phosphate + ADP + H(+). It functions in the pathway isoprenoid biosynthesis; isopentenyl diphosphate biosynthesis via DXP pathway; isopentenyl diphosphate from 1-deoxy-D-xylulose 5-phosphate: step 3/6. In terms of biological role, catalyzes the phosphorylation of the position 2 hydroxy group of 4-diphosphocytidyl-2C-methyl-D-erythritol. This Solibacter usitatus (strain Ellin6076) protein is 4-diphosphocytidyl-2-C-methyl-D-erythritol kinase.